The primary structure comprises 673 residues: Vasorin (673 aa).

The N-terminal stretch at methionine 1–glycine 23 is a signal peptide. The 28-residue stretch at cysteine 24–proline 51 folds into the LRRNT domain. Topologically, residues cysteine 24–proline 575 are extracellular. LRR repeat units follow at residues proline 52–glycine 74, glycine 77–proline 98, asparagine 101–glycine 122, arginine 125–threonine 146, arginine 149–arginine 170, leucine 171–threonine 191, asparagine 193–arginine 214, asparagine 217–leucine 238, glycine 240–glycine 262, and alanine 265–phenylalanine 287. The N-linked (GlcNAc...) asparagine glycan is linked to asparagine 101. The N-linked (GlcNAc...) (complex) asparagine glycan is linked to asparagine 117. An N-linked (GlcNAc...) asparagine glycan is attached at asparagine 273. Positions asparagine 298 to alanine 351 constitute an LRRCT domain. Low complexity predominate over residues valine 358 to alanine 370. The interval valine 358–proline 404 is disordered. Pro residues predominate over residues proline 390–proline 404. Residues glutamine 405 to glutamate 442 form the EGF-like domain. 3 cysteine pairs are disulfide-bonded: cysteine 409/cysteine 420, cysteine 414/cysteine 430, and cysteine 432/cysteine 441. Residues proline 460–alanine 558 enclose the Fibronectin type-III domain. N-linked (GlcNAc...) asparagine glycans are attached at residues asparagine 500 and asparagine 528. The helical transmembrane segment at leucine 576–alanine 596 threads the bilayer. Residues tyrosine 597–isoleucine 673 lie on the Cytoplasmic side of the membrane.

In terms of assembly, interacts with TGFB1, TGFB2 and TGFB3. Post-translationally, N-glycosylated. N-glycan heterogeneity at Asn-117: Hex5HexNAc4 (minor), dHex1Hex5HexNAc4 (major), Hex6HexNAc5 (minor) and dHex1Hex6HexNAc5 (minor). Expressed at highest levels in aorta, at intermediate levels in kidney and placenta and at lowest levels in brain, heart, liver, lung and skeletal muscle. Within the aorta, the strongest expression is found in the tunica media of the proximal ascending aorta, the descending thoracic aorta, the abdominal aorta and the coronary arteries. Within the kidney, expression is found in the interstitial cells.

The protein resides in the membrane. The protein localises to the secreted. Its function is as follows. May act as an inhibitor of TGF-beta signaling. The polypeptide is Vasorin (VASN) (Homo sapiens (Human)).